The sequence spans 461 residues: Argininosuccinate lyase (461 aa).

This sequence belongs to the lyase 1 family. Argininosuccinate lyase subfamily.

It localises to the cytoplasm. The catalysed reaction is 2-(N(omega)-L-arginino)succinate = fumarate + L-arginine. Its pathway is amino-acid biosynthesis; L-arginine biosynthesis; L-arginine from L-ornithine and carbamoyl phosphate: step 3/3. The chain is Argininosuccinate lyase from Dehalococcoides mccartyi (strain ATCC BAA-2100 / JCM 16839 / KCTC 5957 / BAV1).